We begin with the raw amino-acid sequence, 216 residues long: Imidazole glycerol phosphate synthase subunit HisH (216 aa).

A Glutamine amidotransferase type-1 domain is found at 2–216 (RVAIIDYGSG…FIANFLKWKP (215 aa)). Catalysis depends on Cys88, which acts as the Nucleophile. Active-site residues include His196 and Glu198.

Heterodimer of HisH and HisF.

The protein localises to the cytoplasm. It catalyses the reaction 5-[(5-phospho-1-deoxy-D-ribulos-1-ylimino)methylamino]-1-(5-phospho-beta-D-ribosyl)imidazole-4-carboxamide + L-glutamine = D-erythro-1-(imidazol-4-yl)glycerol 3-phosphate + 5-amino-1-(5-phospho-beta-D-ribosyl)imidazole-4-carboxamide + L-glutamate + H(+). It carries out the reaction L-glutamine + H2O = L-glutamate + NH4(+). It participates in amino-acid biosynthesis; L-histidine biosynthesis; L-histidine from 5-phospho-alpha-D-ribose 1-diphosphate: step 5/9. IGPS catalyzes the conversion of PRFAR and glutamine to IGP, AICAR and glutamate. The HisH subunit catalyzes the hydrolysis of glutamine to glutamate and ammonia as part of the synthesis of IGP and AICAR. The resulting ammonia molecule is channeled to the active site of HisF. The polypeptide is Imidazole glycerol phosphate synthase subunit HisH (Brucella melitensis biotype 1 (strain ATCC 23456 / CCUG 17765 / NCTC 10094 / 16M)).